We begin with the raw amino-acid sequence, 330 residues long: Copper-containing nitrite reductase (330 aa).

Plastocyanin-like domains lie at G1–V165 and Y166–A330. H85, H90, H125, C126, H135, M140, and H296 together coordinate Cu cation.

This sequence belongs to the multicopper oxidase family. In terms of assembly, homotrimer. Cu(2+) is required as a cofactor. Requires Cu(+) as cofactor. It depends on FAD as a cofactor.

The protein resides in the periplasm. It catalyses the reaction nitric oxide + Fe(III)-[cytochrome c] + H2O = Fe(II)-[cytochrome c] + nitrite + 2 H(+). The protein operates within nitrogen metabolism; nitrate reduction (denitrification); dinitrogen from nitrate: step 2/4. The polypeptide is Copper-containing nitrite reductase (nirK) (Alcaligenes xylosoxydans xylosoxydans (Achromobacter xylosoxidans)).